The following is a 1657-amino-acid chain: Androglobin (1657 aa).

Residues 1-11 show a composition bias toward basic residues; that stretch reads MASKQAKRKEV. 2 disordered regions span residues 1–40 and 321–398; these read MASK…SFEQ and TKEN…SSDV. Residues 70–402 enclose the Calpain catalytic domain; sequence KDKTAKSPIF…RPSSDVQYSM (333 aa). The span at 321–386 shows a compositional bias: basic and acidic residues; the sequence is TKENKDGKDG…DGEKEKEKFK (66 aa). A Globin; C-terminal part domain is found at 762–889; the sequence is HVCSMTTFVI…EDVSLAEWVD (128 aa). 2 residues coordinate heme b: Gln-791 and His-823. Positions 905-934 constitute an IQ domain; that stretch reads EIAAAVKIQSMWKGCYVRLLMKARKPETKE. Residues 935–967 form the Globin; N-terminal part domain; sequence NVTVADTLQKIWAVLEMNLEQYALSLLRLMFKS. 4 disordered regions span residues 1184–1226, 1288–1356, 1422–1459, and 1638–1657; these read SKQV…TDTG, KHEE…QEDP, TTDT…ADIK, and IEKK…GKKK. The segment covering 1321 to 1336 has biased composition (basic and acidic residues); the sequence is EKSAEKEKLAKEKQAP. Composition is skewed to polar residues over residues 1341 to 1351 and 1422 to 1443; these read QQVQMPTAVHS and TTDT…SQTK. The stretch at 1585-1640 forms a coiled coil; sequence DEVLEMYGEMRDSVDEARQKILDIREVYRNKLLEAERLRMEALAAQEAAVKIEIEK.

It in the central section; belongs to the globin family. This sequence in the N-terminal section; belongs to the peptidase C2 family. As to quaternary structure, interacts with septin SEPT10; contributes to in vitro proteolytic cleavage of SEPT10 in a calmodulin-dependent manner. Interacts with CFAP69. Interacts with SPEF2. May interact with calmodulin. Strongly expressed in testis and lung. Weakly expressed in heart, brain, spleen, kidney and tongue.

It localises to the cell projection. Its subcellular location is the cilium. The protein resides in the flagellum. Functionally, probable chimeric globin with a bis-histidyl six-coordinate heme-iron atom through which it could bind dioxygen, carbon monoxide and nitric oxide. Required for sperm flagellum formation and maturation of elongating spermatids, thus playing an essential role in male fertility. The sequence is that of Androglobin from Mus musculus (Mouse).